We begin with the raw amino-acid sequence, 889 residues long: Alanine--tRNA ligase (889 aa).

Residues histidine 587, histidine 591, cysteine 691, and histidine 695 each coordinate Zn(2+). Disordered stretches follow at residues 734 to 760 (QQEQESKRKAEEAVAKEQLEKQREENK) and 866 to 889 (AQGGGKDTSKKDEAISKAKSMILG). Positions 872-881 (DTSKKDEAIS) are enriched in basic and acidic residues.

Belongs to the class-II aminoacyl-tRNA synthetase family. Requires Zn(2+) as cofactor.

It is found in the cytoplasm. The enzyme catalyses tRNA(Ala) + L-alanine + ATP = L-alanyl-tRNA(Ala) + AMP + diphosphate. Its function is as follows. Catalyzes the attachment of alanine to tRNA(Ala) in a two-step reaction: alanine is first activated by ATP to form Ala-AMP and then transferred to the acceptor end of tRNA(Ala). Also edits incorrectly charged Ser-tRNA(Ala) and Gly-tRNA(Ala) via its editing domain. This chain is Alanine--tRNA ligase, found in Nitrosopumilus maritimus (strain SCM1).